A 25-amino-acid chain; its full sequence is M-poneritoxin-Nc2a (25 aa).

The protein belongs to the ponericin-L family. Expressed by the venom gland.

The protein localises to the secreted. It is found in the target cell membrane. Its function is as follows. Membrane-perturbating peptide with multiple activities. It is insecticidal, since it induces reversible paralysis in insects (L.cuprina) after 1 hour, but fails to kill them. It shows moderate antibacterial activity against some Gram-positive and Gram-negative bacteria. It is also antiparasitic, since it moderately inhibits the larval development of the major pathogenic nematode of ruminants (H.contortus, IC(50)=23.2 uM), but fails to reduce the motility of adult males of the other nematode B.malayi. It also shows moderate cytotoxic activity against HEK293 cells (EC(50)=48-57 uM) but does not induce hemolysis in human erythrocytes. It also causes a moderate increase in intracellular calcium concentration on neuronal and epithelial cell lines, which supports a non-specific membrane perturbation mechanism of action. The chain is M-poneritoxin-Nc2a from Neoponera commutata (Large hunting ant).